The primary structure comprises 115 residues: NAD(P)H-quinone oxidoreductase subunit M (115 aa).

This sequence belongs to the complex I NdhM subunit family. In terms of assembly, NDH-1 can be composed of about 15 different subunits; different subcomplexes with different compositions have been identified which probably have different functions.

It localises to the cellular thylakoid membrane. It catalyses the reaction a plastoquinone + NADH + (n+1) H(+)(in) = a plastoquinol + NAD(+) + n H(+)(out). The enzyme catalyses a plastoquinone + NADPH + (n+1) H(+)(in) = a plastoquinol + NADP(+) + n H(+)(out). Its function is as follows. NDH-1 shuttles electrons from an unknown electron donor, via FMN and iron-sulfur (Fe-S) centers, to quinones in the respiratory and/or the photosynthetic chain. The immediate electron acceptor for the enzyme in this species is believed to be plastoquinone. Couples the redox reaction to proton translocation, and thus conserves the redox energy in a proton gradient. Cyanobacterial NDH-1 also plays a role in inorganic carbon-concentration. This is NAD(P)H-quinone oxidoreductase subunit M from Prochlorococcus marinus (strain MIT 9215).